The following is a 610-amino-acid chain: ATP-dependent RNA helicase HAS1 (610 aa).

Disordered regions lie at residues 1 to 81 (MTAA…AELK) and 112 to 131 (ALAV…DDPT). The segment covering 9 to 18 (KKRKRKHKAK) has biased composition (basic residues). The span at 51–76 (PEVEDVVADASENDVESGAEEDEEQV) shows a compositional bias: acidic residues. Residues 131–159 (TRFDELNLSERTMEAIKTMGFESMTEIQR) carry the Q motif motif. One can recognise a Helicase ATP-binding domain in the interval 162-337 (IPPLLSGKDV…RISLKAGPLY (176 aa)). An ATP-binding site is contributed by 175-182 (AKTGSGKT). The DEAD box motif lies at 285-288 (DEAD). The Helicase C-terminal domain maps to 351-521 (GLEQGYVICD…NIQSQLEALI (171 aa)). Over residues 584-594 (DKKVEGRREYG) the composition is skewed to basic and acidic residues. Residues 584–610 (DKKVEGRREYGRQPQQGRRPMKPNKRF) are disordered.

The protein belongs to the DEAD box helicase family. DDX18/HAS1 subfamily. Associates in the nucleolus with the 60S and pre-60S ribosomal subunits.

It is found in the nucleus. The protein localises to the nucleolus. The enzyme catalyses ATP + H2O = ADP + phosphate + H(+). ATP-dependent RNA helicase involved in 40S ribosomal subunit biogenesis. Required for the processing and cleavage of 35S pre-rRNA at sites A0, A1, and A2, leading to mature 18S rRNA. The protein is ATP-dependent RNA helicase HAS1 (HAS1) of Phaeosphaeria nodorum (strain SN15 / ATCC MYA-4574 / FGSC 10173) (Glume blotch fungus).